The sequence spans 467 residues: UDP-N-acetylmuramate--L-alanine ligase (467 aa).

Residue 114 to 120 (GTHGKTT) coordinates ATP.

This sequence belongs to the MurCDEF family.

The protein resides in the cytoplasm. The catalysed reaction is UDP-N-acetyl-alpha-D-muramate + L-alanine + ATP = UDP-N-acetyl-alpha-D-muramoyl-L-alanine + ADP + phosphate + H(+). It participates in cell wall biogenesis; peptidoglycan biosynthesis. In terms of biological role, cell wall formation. This Bradyrhizobium sp. (strain ORS 278) protein is UDP-N-acetylmuramate--L-alanine ligase.